Here is a 350-residue protein sequence, read N- to C-terminus: D-alanine--D-alanine ligase (350 aa).

Residues 134–337 form the ATP-grasp domain; sequence KIFAAQRGVK…LPKKHSIKVS (204 aa). Residue 160–212 coordinates ATP; that stretch reads IAYPIILKPARLGSSIGVSVINEEKELDYGRDLAFEYDDTIIAESFKSGVKEY. Asp289, Glu301, and Asn303 together coordinate Mg(2+).

Belongs to the D-alanine--D-alanine ligase family. The cofactor is Mg(2+). Mn(2+) serves as cofactor.

The protein localises to the cytoplasm. The enzyme catalyses 2 D-alanine + ATP = D-alanyl-D-alanine + ADP + phosphate + H(+). It participates in cell wall biogenesis; peptidoglycan biosynthesis. In terms of biological role, cell wall formation. In Helicobacter hepaticus (strain ATCC 51449 / 3B1), this protein is D-alanine--D-alanine ligase.